A 163-amino-acid polypeptide reads, in one-letter code: MDATSLATLWATIALIIFLGVAIYIKVPGLIAKALDARAARISSELDEARKLRDEAQQLLGQYKKKRKEAEQEAADIVAAAKREAEMLATEAHKKTEDYVIRRTALAEQKIGQAERDAVAEVRASAVDIAVEAARALLAAKVDVKAGADLFKASLADVKAKLN.

The chain crosses the membrane as a helical span at residues Ser5–Ile25.

The protein belongs to the ATPase B chain family. As to quaternary structure, F-type ATPases have 2 components, F(1) - the catalytic core - and F(0) - the membrane proton channel. F(1) has five subunits: alpha(3), beta(3), gamma(1), delta(1), epsilon(1). F(0) has three main subunits: a(1), b(2) and c(10-14). The alpha and beta chains form an alternating ring which encloses part of the gamma chain. F(1) is attached to F(0) by a central stalk formed by the gamma and epsilon chains, while a peripheral stalk is formed by the delta and b chains.

It localises to the cell inner membrane. In terms of biological role, f(1)F(0) ATP synthase produces ATP from ADP in the presence of a proton or sodium gradient. F-type ATPases consist of two structural domains, F(1) containing the extramembraneous catalytic core and F(0) containing the membrane proton channel, linked together by a central stalk and a peripheral stalk. During catalysis, ATP synthesis in the catalytic domain of F(1) is coupled via a rotary mechanism of the central stalk subunits to proton translocation. Functionally, component of the F(0) channel, it forms part of the peripheral stalk, linking F(1) to F(0). In Mesorhizobium japonicum (strain LMG 29417 / CECT 9101 / MAFF 303099) (Mesorhizobium loti (strain MAFF 303099)), this protein is ATP synthase subunit b 2.